The following is a 223-amino-acid chain: N-acetylmuramic acid 6-phosphate phosphatase (223 aa).

Asp-9 serves as the catalytic Nucleophile. 3 residues coordinate Mg(2+): Asp-9, Asp-11, and Asp-168. The active-site Proton donor is Asp-11.

The protein belongs to the HAD-like hydrolase superfamily. CbbY/CbbZ/Gph/YieH family. Phosphatase MupP subfamily. Mg(2+) serves as cofactor.

The enzyme catalyses N-acetyl-D-muramate 6-phosphate + H2O = N-acetyl-D-muramate + phosphate. Its pathway is cell wall biogenesis; peptidoglycan recycling. In terms of biological role, specifically catalyzes the dephosphorylation of N-acetylmuramate 6-phosphate (MurNAc-6P) to MurNac. Is involved in peptidoglycan recycling as part of a cell wall recycling pathway that bypasses de novo biosynthesis of the peptidoglycan precursor UDP-MurNAc. Plays a role in intrinsic resistance to fosfomycin, which targets the de novo synthesis of UDP-MurNAc. Shows a very low activity on GlcNAc-6P, and neither alpha-1-phosphorylated MurNAc, GlcNAc, or glucose nor glucosamine-6P or glucose-6P can be used as a substrate. The chain is N-acetylmuramic acid 6-phosphate phosphatase from Pseudomonas putida (strain ATCC 47054 / DSM 6125 / CFBP 8728 / NCIMB 11950 / KT2440).